A 746-amino-acid chain; its full sequence is MEHTYQHAWIIPFAPLPFTMSIGLGLLLVPTATKNLRRMWTFPSVSLLSIAMVFSVNLSIQQINGSSIYQHLWSWTINNDFSFEFGHLIDPLTSIMSILITTVGIMVLIYSDNYMSHDQGYLRFFAYMSFSNTSMLGLVTSSNLIQIYIFWELVGMCSYLLIGFWFTRPTAANACQKAFVTNRVGDFGLLLGILGFYWITGSFEFRDLFEIFTNLIHNNGVNSLFATLCAFLLFVGAVAKSAQFPLHVWLPDAMEGPTPISALIHAATMVAAGIFLVARLLPLFTVIPYIMNLISLIGVITLLLGATLALAQRDIKRSLAYSTMSQLGYIMLAPGIGSYRAALFHLITHAYSKALLFLGSGSIIHSMEPIVGYSPDKSQNVVLMGGLTKYLPITKTTFLLGTLSLCGIPPLACFWSKDEILNDSWLYSPIFAIIACSTAGLTAFYMVRVYLLTFDGHLHVHFQNYSGTRNSSFYSISIWGKEGTKFVNGNLPLSTLKPNKISFFSKKISNKMDGNVGNRIRSFSFRIRFDNKETFVYPHESDNTMLLPLLGLVLFTLFVGSVGIPFDQGGTEFDILSKWLNPSINLLHPNSNVSVDWYEFGTNAIYSVSIACFGIFIASLFYGSIYSSFQNLDFINSFVKKPGSKRIFLDRIINVIYNWSYNRGYIDVFYTTCFTKGIRGLAELTYLLDRRLIDGIANGIGMASFFVGEGIKYVGGGRISSYLFVYLSYVSILLLIYYFYFFSFLF.

A run of 15 helical transmembrane segments spans residues 9–29 (WIIP…LLLV), 40–60 (WTFP…NLSI), 89–109 (IDPL…MVLI), 122–139 (LRFF…LGLV), 147–167 (IYIF…FWFT), 185–205 (GDFG…SFEF), 219–239 (NGVN…GAVA), 258–278 (TPIS…FLVA), 280–300 (LLPL…IGVI), 327–347 (LGYI…FHLI), 396–416 (TTFL…CFWS), 425–445 (WLYS…TAFY), 546–566 (LLPL…GIPF), 605–625 (IYSV…YGSI), and 722–742 (YLFV…FYFF).

Belongs to the complex I subunit 5 family. As to quaternary structure, NDH is composed of at least 16 different subunits, 5 of which are encoded in the nucleus.

It localises to the plastid. It is found in the chloroplast thylakoid membrane. The catalysed reaction is a plastoquinone + NADH + (n+1) H(+)(in) = a plastoquinol + NAD(+) + n H(+)(out). The enzyme catalyses a plastoquinone + NADPH + (n+1) H(+)(in) = a plastoquinol + NADP(+) + n H(+)(out). In terms of biological role, NDH shuttles electrons from NAD(P)H:plastoquinone, via FMN and iron-sulfur (Fe-S) centers, to quinones in the photosynthetic chain and possibly in a chloroplast respiratory chain. The immediate electron acceptor for the enzyme in this species is believed to be plastoquinone. Couples the redox reaction to proton translocation, and thus conserves the redox energy in a proton gradient. The sequence is that of NAD(P)H-quinone oxidoreductase subunit 5, chloroplastic (ndhF) from Calycanthus floridus var. glaucus (Eastern sweetshrub).